Consider the following 565-residue polypeptide: Phospholipase B-like protein C (565 aa).

Positions 1–21 are cleaved as a signal peptide; sequence MNKIIILISLFLNFLFGYVVC. 10 N-linked (GlcNAc...) asparagine glycosylation sites follow: asparagine 53, asparagine 84, asparagine 118, asparagine 200, asparagine 201, asparagine 211, asparagine 266, asparagine 302, asparagine 406, and asparagine 485.

It belongs to the phospholipase B-like family.

Its subcellular location is the secreted. In terms of biological role, probable phospholipase. The polypeptide is Phospholipase B-like protein C (plbC) (Dictyostelium discoideum (Social amoeba)).